The primary structure comprises 108 residues: Small ribosomal subunit protein eS25B (108 aa).

Over residues 1–20 (MPPKQQLSKAAKAAAALAGG) the composition is skewed to low complexity. The segment at 1 to 30 (MPPKQQLSKAAKAAAALAGGKKSKKKWSKK) is disordered. At Pro-2 the chain carries N,N-dimethylproline; by NTM1. The span at 21–30 (KKSKKKWSKK) shows a compositional bias: basic residues.

The protein belongs to the eukaryotic ribosomal protein eS25 family. Component of the small ribosomal subunit (SSU). Mature yeast ribosomes consist of a small (40S) and a large (60S) subunit. The 40S small subunit contains 1 molecule of ribosomal RNA (18S rRNA) and 33 different proteins (encoded by 57 genes). The large 60S subunit contains 3 rRNA molecules (25S, 5.8S and 5S rRNA) and 46 different proteins (encoded by 81 genes).

Its subcellular location is the cytoplasm. Component of the ribosome, a large ribonucleoprotein complex responsible for the synthesis of proteins in the cell. The small ribosomal subunit (SSU) binds messenger RNAs (mRNAs) and translates the encoded message by selecting cognate aminoacyl-transfer RNA (tRNA) molecules. The large subunit (LSU) contains the ribosomal catalytic site termed the peptidyl transferase center (PTC), which catalyzes the formation of peptide bonds, thereby polymerizing the amino acids delivered by tRNAs into a polypeptide chain. The nascent polypeptides leave the ribosome through a tunnel in the LSU and interact with protein factors that function in enzymatic processing, targeting, and the membrane insertion of nascent chains at the exit of the ribosomal tunnel. The chain is Small ribosomal subunit protein eS25B from Saccharomyces cerevisiae (strain ATCC 204508 / S288c) (Baker's yeast).